We begin with the raw amino-acid sequence, 497 residues long: Latent membrane protein 2 (497 aa).

The segment at 1-108 (MGSLEMVPMG…PPYSPRDDSS (108 aa)) is disordered. Residues 1–123 (MGSLEMVPMG…EAGRGSMNPV (123 aa)) lie on the Cytoplasmic side of the membrane. Residues 27-41 (NNSQYPSASGSSGNT) show a composition bias toward polar residues. The short motif at 97–101 (PPPPY) is the PPxY motif element. Tyr112 is modified (phosphotyrosine; by host). A helical membrane pass occupies residues 124–144 (CLPVIVAPYLFWLAAIAASCF). Over 145-147 (TAS) the chain is Extracellular. The chain crosses the membrane as a helical span at residues 148-168 (VSTVVTATGLALSLLLLAAVA). At 169–177 (SSYAAAQRK) the chain is on the cytoplasmic side. Residues 178-198 (LLTPVTVLTAVVTFFAICLTW) traverse the membrane as a helical segment. Over 199–211 (RIEDPPFNSLLFA) the chain is Extracellular. A helical membrane pass occupies residues 212–232 (LLAAAGGLQGIYVLVMLVLLI). The Cytoplasmic segment spans residues 233-241 (LAYRRRWRR). A helical membrane pass occupies residues 242–262 (LTVCGGIMFLACVLVLIVDAV). The Extracellular segment spans residues 263-267 (LQLSP). A helical transmembrane segment spans residues 268–288 (LLGAVTVVSMTLLLLAFVLWL). Over 289-296 (SSPGGLGT) the chain is Cytoplasmic. The chain crosses the membrane as a helical span at residues 297 to 317 (LGAALLTLAAALALLASLILG). Thr318 is a topological domain (extracellular). Residues 319–339 (LNLTTMFLLMLLWTLVVLLIC) form a helical membrane-spanning segment. Residues 340 to 354 (SSCSSCPLSKILLAR) are Cytoplasmic-facing. Residues 355 to 375 (LFLYALALLLLASALIAGGSI) form a helical membrane-spanning segment. Residues 376–388 (LQTNFKSLSSTEF) are Extracellular-facing. Residues 389 to 409 (IPNLFCMLLLIVAGILFILAI) traverse the membrane as a helical segment. The Cytoplasmic portion of the chain corresponds to 410 to 422 (LTEWGSGNRTYGP). A helical transmembrane segment spans residues 423 to 443 (VFMCLGGLLTMVAGAVWLTVM). At 444–449 (SNTLLS) the chain is on the extracellular side. Residues 450-470 (AWILTAGFLIFLIGFALFGVI) form a helical membrane-spanning segment. The Cytoplasmic portion of the chain corresponds to 471 to 497 (RCCRYCCYYCLTLESEERPPTPYRNTV).

It belongs to the herpesviridae LMP-2 family. The cytoplasmic N-terminal domain interacts with human SRC family protein tyrosine kinases SYK and LYN. Binds human ITCH, WWP2 and NEDD4L. In terms of processing, phosphorylated on cytoplasmic N-terminal tyrosine residues, possibly by human LYN. Post-translationally, can be ubiquitinated by human ITCH and WWP2 on the N-terminus in a lysine-independent manner.

Its subcellular location is the host cell membrane. The protein resides in the host endomembrane system. The protein localises to the host cytoplasm. It localises to the host perinuclear region. In terms of biological role, maintains EBV latent infection of B-lymphocyte, by preventing lytic reactivation of the virus in response to surface immunoglobulin (sIg) cross-linking. Acts like a dominant negative inhibitor of the sIg-associated protein tyrosine kinases, LYN and SYK. Also blocks translocation of the B-cell antigen receptor (BCR) into lipid rafts, preventing the subsequent signaling and accelerated internalization of the BCR upon BCR cross-linking. Serves as a molecular scaffold to recruit SYK, LYN and E3 protein-ubiquitin ligases, such as ITCH and NEDD4L, leading to ubiquitination and potential degradation of both tyrosines kinases. Possesses a constitutive signaling activity in non-transformed cells, inducing bypass of normal B lymphocyte developmental checkpoints allowing immunoglobulin-negative cells to colonize peripheral lymphoid organs. Its function is as follows. May be a negative regulator of isoform LMP2A. The chain is Latent membrane protein 2 (LMP2) from Epstein-Barr virus (strain B95-8) (HHV-4).